A 244-amino-acid polypeptide reads, in one-letter code: Reticulon-like protein B7 (244 aa).

Residues 70-244 form the Reticulon domain; the sequence is PADVLLWRDK…EAKFLSKIPH (175 aa). Transmembrane regions (helical) follow at residues 80–100, 103–123, and 172–192; these read KVTLGLLSAVTVIWLLFGFGG, LLTSLCRGSILFLLLSFLWSN, and FVMAVIGLWLVSVIGNWFSFL.

It localises to the endoplasmic reticulum membrane. This chain is Reticulon-like protein B7 (RTNLB7), found in Arabidopsis thaliana (Mouse-ear cress).